A 522-amino-acid chain; its full sequence is Cytochrome b mRNA maturase bI3 (522 aa).

The Mitochondrial matrix portion of the chain corresponds to 1 to 31; sequence MTIRKSNPYLSLVNSYLMDSPQPSSMNYWWN. Positions 1-163 are cytochrome b; the sequence is MTIRKSNPYL…MPFMGGDLVP (163 aa). Residues 32-52 form a helical membrane-spanning segment; it reads VGSLLGLCLVMQMASGMFLAM. The Mitochondrial intermembrane segment spans residues 53–84; sequence HYSSSMELAFNSVEHMMRDVNAGWLMRYIHAN. The helical transmembrane segment at 85 to 105 threads the bilayer; the sequence is GASFFFMCLYLHMGKALYYGS. Over 106-110 the chain is Mitochondrial matrix; sequence YKSPR. Residues 111–131 form a helical membrane-spanning segment; sequence VLVWSMGVMMFMLTMATAFMG. The Mitochondrial intermembrane segment spans residues 132 to 154; that stretch reads YCLVYGQMSHWGATVITNLLSAM. Residues 155–175 traverse the membrane as a helical segment; sequence PFMGGDLVPLSIILSLYLLYI. Positions 164 to 522 are maturase; that stretch reads LSIILSLYLL…PYMSWHQKEQ (359 aa). Topologically, residues 176–522 are mitochondrial matrix; it reads SLKTFMKMIF…PYMSWHQKEQ (347 aa).

In the N-terminal section; belongs to the cytochrome b family. The protein in the C-terminal section; belongs to the LAGLIDADG endonuclease family.

The protein localises to the mitochondrion inner membrane. Its function is as follows. Mitochondrial mRNA maturase required for splicing of intron 3 of the cytochrome b (COB) gene, containing its own coding sequence. The polypeptide is Cytochrome b mRNA maturase bI3 (bI3) (Debaryomyces hansenii (strain ATCC 36239 / CBS 767 / BCRC 21394 / JCM 1990 / NBRC 0083 / IGC 2968) (Yeast)).